We begin with the raw amino-acid sequence, 200 residues long: WASH complex subunit 3 (200 aa).

A coiled-coil region spans residues 56–76; sequence SLRIQQIETTLSILEAKLASI. Disordered regions lie at residues 87–130 and 165–200; these read VRAP…AENI and DPNL…SFSD.

The protein belongs to the CCDC53 family. Component of the WASH complex.

The polypeptide is WASH complex subunit 3 (Danio rerio (Zebrafish)).